The chain runs to 154 residues: Myoglobin (154 aa).

The Globin domain occupies 2-148; it reads GLSDAEWQLV…FRNDIAAKYK (147 aa). Serine 4 carries the post-translational modification Phosphoserine. Position 65 (histidine 65) interacts with nitrite. Histidine 65 provides a ligand contact to O2. At threonine 68 the chain carries Phosphothreonine. A heme b-binding site is contributed by histidine 94.

This sequence belongs to the globin family. As to quaternary structure, monomeric.

It localises to the cytoplasm. The protein resides in the sarcoplasm. It carries out the reaction Fe(III)-heme b-[protein] + nitric oxide + H2O = Fe(II)-heme b-[protein] + nitrite + 2 H(+). The catalysed reaction is H2O2 + AH2 = A + 2 H2O. Functionally, monomeric heme protein which primary function is to store oxygen and facilitate its diffusion within muscle tissues. Reversibly binds oxygen through a pentacoordinated heme iron and enables its timely and efficient release as needed during periods of heightened demand. Depending on the oxidative conditions of tissues and cells, and in addition to its ability to bind oxygen, it also has a nitrite reductase activity whereby it regulates the production of bioactive nitric oxide. Under stress conditions, like hypoxia and anoxia, it also protects cells against reactive oxygen species thanks to its pseudoperoxidase activity. This Orycteropus afer (Aardvark) protein is Myoglobin (MB).